A 900-amino-acid polypeptide reads, in one-letter code: Alpha-actinin-3 (900 aa).

N-acetylmethionine is present on methionine 1. Residues 1–26 (MMMVMQPEGLGAGEGPFSGGGGGEYM) form a disordered region. The tract at residues 1–260 (MMMVMQPEGL…IMTYVSCFYH (260 aa)) is actin-binding. The segment covering 10-24 (LGAGEGPFSGGGGGE) has biased composition (gly residues). Calponin-homology (CH) domains follow at residues 44–148 (KQQR…LRFA) and 157–263 (TSAK…HAFA). Spectrin repeat units follow at residues 287 to 397 (KLME…WLLS), 407 to 512 (HLAE…ALER), 522 to 633 (QLQL…TLQE), and 643 to 746 (RLRR…EVEN). EF-hand domains lie at 759–794 (EQLNEFRASFNHFDRKRNGMMEPDDFRACLISMGYD) and 795–830 (LGEVEFARIMTMVDPNAAGVVTFQAFIDFMTRETAE). Aspartate 772, asparagine 776, methionine 778, aspartate 783, aspartate 808, and asparagine 810 together coordinate Ca(2+).

It belongs to the alpha-actinin family. Homodimer; antiparallel. Also forms heterodimers with ACTN2. Interacts with MYOZ1. Expression restricted to skeletal muscle fast (type 2) fibers (at protein level).

F-actin cross-linking protein which is thought to anchor actin to a variety of intracellular structures. This is a bundling protein. The protein is Alpha-actinin-3 (Actn3) of Mus musculus (Mouse).